We begin with the raw amino-acid sequence, 297 residues long: Protease HtpX homolog (297 aa).

The next 2 membrane-spanning stretches (helical) occupy residues 5–25 (IFLFLLSNILVITTIGIVLSI) and 44–64 (IVALLVFSAVVGFVGSFMSLL). Residue His155 coordinates Zn(2+). Residue Glu156 is part of the active site. Residue His159 coordinates Zn(2+). 2 helical membrane passes run 170 to 190 (LLQGIVNTFVVFFARIAAWAV) and 204 to 224 (FIAVIVFQIVFSILGSLVVFA). Glu230 contacts Zn(2+).

The protein belongs to the peptidase M48B family. Zn(2+) serves as cofactor.

It is found in the cell membrane. The chain is Protease HtpX homolog from Bacillus licheniformis (strain ATCC 14580 / DSM 13 / JCM 2505 / CCUG 7422 / NBRC 12200 / NCIMB 9375 / NCTC 10341 / NRRL NRS-1264 / Gibson 46).